Consider the following 2682-residue polypeptide: 3-methylorcinaldehyde synthase (2682 aa).

The N-terminal acylcarrier protein transacylase domain (SAT) stretch occupies residues 111 to 272; sequence LIPLVVIEQL…TEITLYGAFH (162 aa). C154 (nucleophile; for transacylase activity) is an active-site residue. The active-site Proton donor/acceptor; for transacylase activity is the H272. In terms of domain architecture, Ketosynthase family 3 (KS3) spans 401 to 826; the sequence is ESDIAVIGMA…GSNASMIVMQ (426 aa). Active-site for beta-ketoacyl synthase activity residues include C573, H708, and H749. Residues 947-1237 are malonyl-CoA:ACP transacylase (MAT) domain; sequence FGGQVSTHIG…ITAMTSRALD (291 aa). Residues 1339 to 1468 are N-terminal hotdog fold; that stretch reads LTFVGFQDSS…GKIKFTNARD (130 aa). Residues 1339–1651 form the PKS/mFAS DH domain; sequence LTFVGFQDSS…YVKIPKLSMQ (313 aa). Positions 1367–1649 are product template (PT) domain; that stretch reads LLLGHMTIQT…IAYVKIPKLS (283 aa). H1371 (proton acceptor; for dehydratase activity) is an active-site residue. Residues 1496–1651 form a C-terminal hotdog fold region; the sequence is VDEVLANRSI…YVKIPKLSMQ (156 aa). D1555 acts as the Proton donor; for dehydratase activity in catalysis. The region spanning 1723–1797 is the Carrier domain; sequence ENITERVKAV…DLMKVVTGVV (75 aa). Residue S1757 is modified to O-(pantetheine 4'-phosphoryl)serine. A methyltransferase domain region spans residues 2021 to 2211; sequence EWPLNQVMYT…AGYGHVYWTE (191 aa). Positions 2303–2548 are NADPH-binding (R) domain; it reads VTGATGGLGA…LGWTPADAIA (246 aa).

It participates in secondary metabolite biosynthesis; terpenoid biosynthesis. Functionally, non-reducing polyketide synthase; part of the gene cluster that mediates the biosynthesis of eupenifeldin, a bistropolone meroterpenoid that acts as an antitumor agent. The first step of eupenifeldin biosynthesis is the biosynthesis of 3-methylorcinaldehyde performed by the non-reducing polyketide synthase eupA. Oxidative dearomatization of 3-methylorcinaldehyde likely catalyzed by the FAD-dependent monooxygenase eupB is followed by oxidative ring expansion by the 2-oxoglutarate-dependent dioxygenase eupC to provide the first tropolone metabolite, tropolone stipitaldehyde. In parallel, generation of sesquiterpene alpha-humulene from farnesylpyrophosphate (FPP) is catalyzed by the terpene cyclase eupE. The cytochrome P450 monooxygenase eupD then hydroxylates humulene to humulenol. The putative Diels-Alderase eupF probably catalyzes the formation of the tropolone-humulene skeleton by linking humulenol and the polyketide moiety. The short-chain dehydrogenase/reductase eupG and the flavin-dependent monooxygenase eupH are also essential for eupenifeldin biosynthesis and are likely the additional decorating enzymes of the tropolone-humulene skeleton to produce final eupenifeldin or derivatives. This chain is 3-methylorcinaldehyde synthase, found in Phoma sp.